Here is a 387-residue protein sequence, read N- to C-terminus: S-adenosylmethionine synthase (387 aa).

Residue His-16 participates in ATP binding. A Mg(2+)-binding site is contributed by Asp-18. Glu-44 lines the K(+) pocket. The L-methionine site is built by Glu-57 and Gln-100. The interval 100 to 110 is flexible loop; sequence QSPDIAQGVDR. ATP is bound by residues 167–169, 232–233, Asp-241, 247–248, Ala-264, and Lys-268; these read DAK, RF, and RK. Asp-241 contacts L-methionine. Residue Lys-272 participates in L-methionine binding.

Belongs to the AdoMet synthase family. In terms of assembly, homotetramer; dimer of dimers. It depends on Mg(2+) as a cofactor. K(+) serves as cofactor.

It localises to the cytoplasm. It carries out the reaction L-methionine + ATP + H2O = S-adenosyl-L-methionine + phosphate + diphosphate. The protein operates within amino-acid biosynthesis; S-adenosyl-L-methionine biosynthesis; S-adenosyl-L-methionine from L-methionine: step 1/1. Its function is as follows. Catalyzes the formation of S-adenosylmethionine (AdoMet) from methionine and ATP. The overall synthetic reaction is composed of two sequential steps, AdoMet formation and the subsequent tripolyphosphate hydrolysis which occurs prior to release of AdoMet from the enzyme. The sequence is that of S-adenosylmethionine synthase from Cupriavidus necator (strain ATCC 17699 / DSM 428 / KCTC 22496 / NCIMB 10442 / H16 / Stanier 337) (Ralstonia eutropha).